A 668-amino-acid chain; its full sequence is DNA ligase (668 aa).

Residues 37–41, 86–87, and glutamate 116 each bind NAD(+); these read DNVYD and SM. The active-site N6-AMP-lysine intermediate is lysine 118. NAD(+)-binding residues include arginine 139, glutamate 173, lysine 288, and lysine 312. Zn(2+) is bound by residues cysteine 406, cysteine 409, cysteine 424, and cysteine 429. The 78-residue stretch at 591–668 folds into the BRCT domain; that stretch reads IPDNPFKDKT…TEEEAIAQIK (78 aa).

The protein belongs to the NAD-dependent DNA ligase family. LigA subfamily. The cofactor is Mg(2+). Mn(2+) is required as a cofactor.

The enzyme catalyses NAD(+) + (deoxyribonucleotide)n-3'-hydroxyl + 5'-phospho-(deoxyribonucleotide)m = (deoxyribonucleotide)n+m + AMP + beta-nicotinamide D-nucleotide.. DNA ligase that catalyzes the formation of phosphodiester linkages between 5'-phosphoryl and 3'-hydroxyl groups in double-stranded DNA using NAD as a coenzyme and as the energy source for the reaction. It is essential for DNA replication and repair of damaged DNA. This is DNA ligase from Lactobacillus acidophilus (strain ATCC 700396 / NCK56 / N2 / NCFM).